A 211-amino-acid polypeptide reads, in one-letter code: Thiamine-phosphate synthase (211 aa).

4-amino-2-methyl-5-(diphosphooxymethyl)pyrimidine is bound by residues glutamine 37 to lysine 41 and asparagine 69. Residues aspartate 70 and aspartate 89 each contribute to the Mg(2+) site. Residue serine 108 participates in 4-amino-2-methyl-5-(diphosphooxymethyl)pyrimidine binding. Threonine 134–threonine 136 is a binding site for 2-[(2R,5Z)-2-carboxy-4-methylthiazol-5(2H)-ylidene]ethyl phosphate. Lysine 137 contacts 4-amino-2-methyl-5-(diphosphooxymethyl)pyrimidine. Residues glycine 166 and valine 186 to serine 187 each bind 2-[(2R,5Z)-2-carboxy-4-methylthiazol-5(2H)-ylidene]ethyl phosphate.

Belongs to the thiamine-phosphate synthase family. Requires Mg(2+) as cofactor.

The catalysed reaction is 2-[(2R,5Z)-2-carboxy-4-methylthiazol-5(2H)-ylidene]ethyl phosphate + 4-amino-2-methyl-5-(diphosphooxymethyl)pyrimidine + 2 H(+) = thiamine phosphate + CO2 + diphosphate. It catalyses the reaction 2-(2-carboxy-4-methylthiazol-5-yl)ethyl phosphate + 4-amino-2-methyl-5-(diphosphooxymethyl)pyrimidine + 2 H(+) = thiamine phosphate + CO2 + diphosphate. It carries out the reaction 4-methyl-5-(2-phosphooxyethyl)-thiazole + 4-amino-2-methyl-5-(diphosphooxymethyl)pyrimidine + H(+) = thiamine phosphate + diphosphate. Its pathway is cofactor biosynthesis; thiamine diphosphate biosynthesis; thiamine phosphate from 4-amino-2-methyl-5-diphosphomethylpyrimidine and 4-methyl-5-(2-phosphoethyl)-thiazole: step 1/1. Condenses 4-methyl-5-(beta-hydroxyethyl)thiazole monophosphate (THZ-P) and 2-methyl-4-amino-5-hydroxymethyl pyrimidine pyrophosphate (HMP-PP) to form thiamine monophosphate (TMP). This is Thiamine-phosphate synthase from Citrobacter koseri (strain ATCC BAA-895 / CDC 4225-83 / SGSC4696).